A 356-amino-acid chain; its full sequence is MALLNITSPHAQGANRTSRLMLLVVYATIPGMFTMTWFFGPGVLVNVLLASISCMLFEALAIKARQRPVGFYLRDFSALVTGVLIGVSLPPYCPWWLLISGSFIAIILAKQLYGGMGFNPFNPAMVAYALLLVSFPVEMTQWAQPKPLWVDGQLPGLMDTLAKVFSGAPIDGYSGATALDIIKQNKGLVLGDLYQQQPLLAEGRWASAGWEWVNIAFLFGGLYLLYKKVYTWHAPVSMLLALALMAALFYDSGSSSSSGSPLFHLLTGATMLGAFFIVTDPVSSTVSTKGRVIYGALIGMLVYVIRTWGSSYPDGVAFAVLLMNFAAPFIDYYTTPRTYGHKKPRRATDSTPRNGH.

4 helical membrane passes run 20–40 (LMLLVVYATIPGMFTMTWFFG), 42–62 (GVLVNVLLASISCMLFEALAI), 68–88 (PVGFYLRDFSALVTGVLIGVS), and 117–137 (GFNPFNPAMVAYALLLVSFPV). The residue at position 177 (threonine 177) is an FMN phosphoryl threonine. The next 5 helical transmembrane spans lie at 205 to 225 (WASAGWEWVNIAFLFGGLYLL), 229 to 249 (VYTWHAPVSMLLALALMAALF), 259 to 279 (GSPLFHLLTGATMLGAFFIVT), 292 to 312 (VIYGALIGMLVYVIRTWGSSY), and 315 to 335 (GVAFAVLLMNFAAPFIDYYTT).

This sequence belongs to the NqrB/RnfD family. As to quaternary structure, the complex is composed of six subunits: RnfA, RnfB, RnfC, RnfD, RnfE and RnfG. The cofactor is FMN.

The protein resides in the cell inner membrane. Part of a membrane-bound complex that couples electron transfer with translocation of ions across the membrane. The sequence is that of Ion-translocating oxidoreductase complex subunit D from Cellvibrio japonicus (strain Ueda107) (Pseudomonas fluorescens subsp. cellulosa).